Reading from the N-terminus, the 539-residue chain is MSCPASPSAAVVSAGALCLCVATVLLATGSNPTALSTASTRSPTSLVRGVDRGLMRPTTAAALTTMREVPQMAEGFSGEATSAWAAAGPQWAAPLVAAASSALALWWWAARRSVRRPLAALAELPTAVTHLAPPMAMFTTTAKVIQPKIRGFICTTTHPIGCEKRVQEEIAYARAHPPTSPGPKRVLVIGCSTGYGLSTRITAAFGYQAATLGVFLAGPPTKGRPAAAGWYNTVAFEKAALEAGLYARSLNGDAFDSTTKARTVEAIKRDLGTVDLVVYSIAAPKRTDPATGVLHKACLKPIGATYTNRTVNTDKAEVTDVSIEPASPEEIADTVKVMGGEDWELWIQALSEAGVLAEGAKTVAYSYIGPEMTWPVYWSGTIGEAKKDVEKAAKRITQQYGCPAYPVVAKALVTQASSAIPVVPLYICLLYRVMKEKGTHEGCIEQMVRLLTTKLYPENGAPIVDEAGRVRVDDWEMAEDVQQAVKDLWSQVSTANLKDISDFAGYQTEFLRLFGFGIDGVDYDQPVDVEADLPSAAQQ.

The transit peptide at 1-68 (MSCPASPSAA…TAAALTTMRE (68 aa)) directs the protein to the mitochondrion. Residues 190–195 (GCSTGY), 216–217 (LA), 253–254 (DA), and 281–282 (IA) each bind NAD(+). Tyr367 contributes to the substrate binding site. Residue Tyr377 is the Proton donor of the active site. Residues Lys386 and 412-414 (LVT) contribute to the NAD(+) site.

It belongs to the TER reductase family. In terms of assembly, monomer. Post-translationally, the N-terminus is blocked.

It localises to the mitochondrion. The catalysed reaction is a 2,3-saturated acyl-CoA + NAD(+) = a (2E)-enoyl-CoA + NADH + H(+). It carries out the reaction butanoyl-CoA + NAD(+) = (2E)-butenoyl-CoA + NADH + H(+). The enzyme catalyses hexanoyl-CoA + NAD(+) = (2E)-hexenoyl-CoA + NADH + H(+). It catalyses the reaction a (2E)-enoyl-CoA + NADPH + H(+) = a 2,3-saturated acyl-CoA + NADP(+). The catalysed reaction is butanoyl-CoA + NADP(+) = (2E)-butenoyl-CoA + NADPH + H(+). It carries out the reaction (2E)-hexenoyl-CoA + NADPH + H(+) = hexanoyl-CoA + NADP(+). The protein operates within lipid metabolism; fatty acid metabolism. Functionally, catalyzes reduction of trans-2-enoyl-CoA to acyl-CoA, an important step in the fatty acid biosynthesis pathway, which is performed in mitochondria under anaerobiosis. Preferably catalyzes the reduction of short chain length substrates such as crotonyl-CoA ((2E)-butenoyl-CoA) and (2E)-hexenoyl-CoA. Can use both NADH and NADPH as electron donor, with 2-3-fold higher specific activities for NADH relative to NADPH. Originally thought to contribute to wax ester production under anaerobic conditions. Later shown to be dispensable for wax ester production under anaerobic conditions, but involved in the greening process (chlorophyll synthesis and/or chloroplast development). This is Trans-2-enoyl-CoA reductase (TER) from Euglena gracilis.